A 92-amino-acid polypeptide reads, in one-letter code: MTATFDKVADIIAETSEIDRATITPESHTIDDLGIDSLDFLDIVFAIDKEFGIKIPLEKWTQEVNEGKVSTEEYFVLKNLCAKIDELKAAKA.

Positions 2–88 (TATFDKVADI…NLCAKIDELK (87 aa)) constitute a Carrier domain. Serine 37 is subject to O-(pantetheine 4'-phosphoryl)serine.

Post-translationally, 4'-phosphopantetheine is transferred from CoA to a specific serine of apo-ACP by AcpS. This modification is essential for activity because fatty acids are bound in thioester linkage to the sulfhydryl of the prosthetic group.

Its subcellular location is the cytoplasm. It functions in the pathway glycolipid biosynthesis; KDO(2)-lipid A biosynthesis. Its function is as follows. Carrier of the growing fatty acid chain in fatty acid biosynthesis. Is involved in the transfer of long hydroxylated fatty acids to lipid A. Is acylated predominantly with 27-hydroxyoctacosanoic acid. This chain is Acyl carrier protein AcpXL (acpXL), found in Rhizobium etli (strain ATCC 51251 / DSM 11541 / JCM 21823 / NBRC 15573 / CFN 42).